The sequence spans 235 residues: Meiotically up-regulated gene 123 protein (235 aa).

Positions 1–14 are enriched in basic and acidic residues; sequence MERLATRSSHDDPY. 3 disordered regions span residues 1 to 34, 58 to 83, and 169 to 235; these read MERL…SNGS, PLHS…GGMR, and SRAD…FDSD. Residues 15-34 show a composition bias toward polar residues; it reads SRSSLPTSNAINSNHESNGS. Over residues 61-77 the composition is skewed to low complexity; sequence SSPSIKSSSQNGKSSSK. Positions 176 to 202 are enriched in polar residues; the sequence is ETTQSDGFESRSGSPTHDIQSYLVNRR. Phosphoserine occurs at positions 180, 187, and 189. Residue Thr-191 is modified to Phosphothreonine.

It is found in the cytoplasm. Its subcellular location is the nucleus. Involved in sporulation and has a role in meiosis. This chain is Meiotically up-regulated gene 123 protein (mug123), found in Schizosaccharomyces pombe (strain 972 / ATCC 24843) (Fission yeast).